The chain runs to 96 residues: Small ubiquitin-related modifier 2 (96 aa).

Residue K11 forms a Glycyl lysine isopeptide (Lys-Gly) (interchain with G-Cter in SUMO) linkage. The region spanning 16-96 (DHINLKVAGQ…FQQQTGGHRI (81 aa)) is the Ubiquitin-like domain. Residue G93 forms a Glycyl lysine isopeptide (Gly-Lys) (interchain with K-? in acceptor proteins) linkage. The propeptide occupies 94 to 96 (HRI).

This sequence belongs to the ubiquitin family. SUMO subfamily. As to quaternary structure, interacts with sae2 and ube2i. Covalently attached to a number of proteins. Post-translationally, polymeric chains can be formed through Lys-11 cross-linking. In terms of processing, cleavage of precursor form by a sentrin-specific protease is necessary for function.

The protein resides in the nucleus. Ubiquitin-like protein that can be covalently attached to proteins as a monomer or as a lysine-linked polymer. Covalent attachment via an isopeptide bond to its substrates requires prior activation by the E1 complex sae1-sae2 and linkage to the E2 enzyme ube2i, and can be promoted by an E3 ligase such as pias1-4. This post-translational modification on lysine residues of proteins plays a crucial role in a number of cellular processes such as nuclear transport, DNA replication and repair, mitosis and signal transduction. Polymeric sumo2 chains are also susceptible to polyubiquitination which functions as a signal for proteasomal degradation of modified proteins. The polypeptide is Small ubiquitin-related modifier 2 (Danio rerio (Zebrafish)).